Reading from the N-terminus, the 116-residue chain is Flagellar transcriptional regulator FlhD (116 aa).

The protein belongs to the FlhD family. In terms of assembly, homodimer; disulfide-linked. Forms a heterohexamer composed of two FlhC and four FlhD subunits. Each FlhC binds a FlhD dimer, forming a heterotrimer, and a hexamer assembles by dimerization of two heterotrimers.

The protein resides in the cytoplasm. Functions in complex with FlhC as a master transcriptional regulator that regulates transcription of several flagellar and non-flagellar operons by binding to their promoter region. Activates expression of class 2 flagellar genes, including fliA, which is a flagellum-specific sigma factor that turns on the class 3 genes. Also regulates genes whose products function in a variety of physiological pathways. The protein is Flagellar transcriptional regulator FlhD of Proteus mirabilis (strain HI4320).